Here is a 193-residue protein sequence, read N- to C-terminus: Imidazoleglycerol-phosphate dehydratase (193 aa).

The protein belongs to the imidazoleglycerol-phosphate dehydratase family.

Its subcellular location is the cytoplasm. It carries out the reaction D-erythro-1-(imidazol-4-yl)glycerol 3-phosphate = 3-(imidazol-4-yl)-2-oxopropyl phosphate + H2O. Its pathway is amino-acid biosynthesis; L-histidine biosynthesis; L-histidine from 5-phospho-alpha-D-ribose 1-diphosphate: step 6/9. The polypeptide is Imidazoleglycerol-phosphate dehydratase (Saccharolobus islandicus (strain Y.G.57.14 / Yellowstone #1) (Sulfolobus islandicus)).